Reading from the N-terminus, the 154-residue chain is Small ribosomal subunit protein uS7 (154 aa).

Belongs to the universal ribosomal protein uS7 family. Part of the 30S ribosomal subunit. Contacts proteins S9 and S11.

One of the primary rRNA binding proteins, it binds directly to 16S rRNA where it nucleates assembly of the head domain of the 30S subunit. Is located at the subunit interface close to the decoding center, probably blocks exit of the E-site tRNA. This is Small ribosomal subunit protein uS7 from Karelsulcia muelleri (strain GWSS) (Sulcia muelleri).